The primary structure comprises 259 residues: MNTAVVTNAAPKIAVKNLNFFYGKFHALRDISLEIPEHKVTAFIGPSGCGKSTLLRVFNRMFELYPEQRAEGEILLDGENLLTSKKDVALLRAKVGMVFQKPTPFPMSIFDNIAFGVKLFESLNTTDLEERVEWALRKAALWGEVKDKLTQSGSSLSGGQQQRLCIARGIAIKPEVLLLDEPCSALDPISTGKIEELITELKSDYTVVIVTHNMQQAARCSDYTAYMYLGDLMEFGATEQIFFKPTRKETEDYITGRFG.

The ABC transporter domain occupies Ile-13–Ile-254. Gly-45–Ser-52 provides a ligand contact to ATP.

The protein belongs to the ABC transporter superfamily. Phosphate importer (TC 3.A.1.7) family. In terms of assembly, the complex is composed of two ATP-binding proteins (PstB), two transmembrane proteins (PstC and PstA) and a solute-binding protein (PstS).

It is found in the cell inner membrane. The catalysed reaction is phosphate(out) + ATP + H2O = ADP + 2 phosphate(in) + H(+). In terms of biological role, part of the ABC transporter complex PstSACB involved in phosphate import. Responsible for energy coupling to the transport system. The sequence is that of Phosphate import ATP-binding protein PstB from Albidiferax ferrireducens (strain ATCC BAA-621 / DSM 15236 / T118) (Rhodoferax ferrireducens).